The chain runs to 442 residues: Cell adhesion molecule 1 (442 aa).

Positions 1–44 (MASVVLPSGSQCAAAAAAAAPPGLRLRLLLLLFSAAALIPTGDG) are cleaved as a signal peptide. Positions 45–139 (QNLFTKDVTV…PPQESYTTIT (95 aa)) constitute an Ig-like V-type domain. Residues 45–374 (QNLFTKDVTV…EEGSIRAVDH (330 aa)) lie on the Extracellular side of the membrane. Residues cysteine 64 and cysteine 124 are joined by a disulfide bond. 4 N-linked (GlcNAc...) asparagine glycosylation sites follow: asparagine 67, asparagine 101, asparagine 113, and asparagine 165. 2 consecutive Ig-like C2-type domains span residues 144–238 (PRNL…RYLE) and 243–329 (PQVH…YMLY). 2 cysteine pairs are disulfide-bonded: cysteine 166–cysteine 220 and cysteine 267–cysteine 313. Residues asparagine 304 and asparagine 308 are each glycosylated (N-linked (GlcNAc...) asparagine). The chain crosses the membrane as a helical span at residues 375–395 (AVIGGVVAVVVFAMLCLLIIL). Residues 396-442 (GRYFARHKGTYFTHEAKGADDAADADTAIINAEGGQNNSEEKKEYFI) lie on the Cytoplasmic side of the membrane. Threonine 422 is modified (phosphothreonine). At serine 434 the chain carries Phosphoserine.

This sequence belongs to the nectin family. Homodimer (via Ig-like V-type domain). Interacts with FARP1. Interacts (via Ig-like V-type domain) with CRTAM (via Ig-like V-type domain); the interaction competes with CRTAM homodimerization and CADM1 homodimerization. Interacts (via C-terminus) with EPB41L3/DAL1. The interaction with EPB41L3/DAL1 may act to anchor CADM1 to the actin cytoskeleton. Interacts (via C-terminus) with MPP2 (via PDZ domain). Interacts (via C-terminus) with MPP3 (via PDZ domain); this interaction connects CADM1 with DLG1. Interacts (via C-terminus) with PALS2 (via PDZ domain). In terms of assembly, (Microbial infection) Interacts with herpes virus 8 proteins vFLIP and vGPCR; these interactions are essential for NF-kappa-B activation. In terms of processing, glycosylation at Asn-67 and Asn-101 promotes adhesive binding and synapse induction.

The protein resides in the cell membrane. The protein localises to the synapse. Its function is as follows. Mediates homophilic cell-cell adhesion in a Ca(2+)-independent manner. Also mediates heterophilic cell-cell adhesion with CADM3 and NECTIN3 in a Ca(2+)-independent manner. Interaction with CRTAM promotes natural killer (NK) cell cytotoxicity and interferon-gamma (IFN-gamma) secretion by CD8+ cells in vitro as well as NK cell-mediated rejection of tumors expressing CADM1 in vivo. In mast cells, may mediate attachment to and promote communication with nerves. CADM1, together with MITF, is essential for development and survival of mast cells in vivo. By interacting with CRTAM and thus promoting the adhesion between CD8+ T-cells and CD8+ dendritic cells, regulates the retention of activated CD8+ T-cell within the draining lymph node. Required for the intestinal retention of intraepithelial CD4+ CD8+ T-cells and, to a lesser extent, intraepithelial and lamina propria CD8+ T-cells and CD4+ T-cells. Interaction with CRTAM promotes the adhesion to gut-associated CD103+ dendritic cells, which may facilitate the expression of gut-homing and adhesion molecules on T-cells and the conversion of CD4+ T-cells into CD4+ CD8+ T-cells. Acts as a synaptic cell adhesion molecule and plays a role in the formation of dendritic spines and in synapse assembly. May be involved in neuronal migration, axon growth, pathfinding, and fasciculation on the axons of differentiating neurons. May play diverse roles in the spermatogenesis including in the adhesion of spermatocytes and spermatids to Sertoli cells and for their normal differentiation into mature spermatozoa. Acts as a tumor suppressor in non-small-cell lung cancer (NSCLC) cells. May contribute to the less invasive phenotypes of lepidic growth tumor cells. (Microbial infection) Induces cell fusion in neuron infected by a neuropathogenic strain of measles. Interacts with measles hemagglutinin to trigger hyperfusogenic F-mediated membrane fusion and presumably transsynaptic cell-to-cell transmission of the virus. The protein is Cell adhesion molecule 1 of Homo sapiens (Human).